Here is a 235-residue protein sequence, read N- to C-terminus: Small ribosomal subunit protein uS3 (235 aa).

A KH type-2 domain is found at 39 to 107 (VRKFLNKELA…PAQINIAEVK (69 aa)).

Belongs to the universal ribosomal protein uS3 family. Part of the 30S ribosomal subunit. Forms a tight complex with proteins S10 and S14.

Its function is as follows. Binds the lower part of the 30S subunit head. Binds mRNA in the 70S ribosome, positioning it for translation. The protein is Small ribosomal subunit protein uS3 of Mannheimia succiniciproducens (strain KCTC 0769BP / MBEL55E).